The chain runs to 152 residues: Protein-export protein SecB (152 aa).

The protein belongs to the SecB family. Homotetramer, a dimer of dimers. One homotetramer interacts with 1 SecA dimer.

The protein resides in the cytoplasm. Functionally, one of the proteins required for the normal export of preproteins out of the cell cytoplasm. It is a molecular chaperone that binds to a subset of precursor proteins, maintaining them in a translocation-competent state. It also specifically binds to its receptor SecA. The sequence is that of Protein-export protein SecB from Dechloromonas aromatica (strain RCB).